Here is an 819-residue protein sequence, read N- to C-terminus: Protein EFR3 homolog A (819 aa).

The segment at 210 to 230 (DTDSRTGPPASPTTGDKEENP) is disordered.

The protein belongs to the EFR3 family. As to quaternary structure, component of a phosphatidylinositol 4-kinase (PI4K) complex. In terms of processing, palmitoylated at its N-terminus, anchoring the protein to the plasma membrane.

It is found in the cell membrane. Component of a complex required to localize phosphatidylinositol 4-kinase (PI4K) to the plasma membrane. The complex acts as a regulator of phosphatidylinositol 4-phosphate (PtdIns(4)P) synthesis. In the complex, efr3a probably acts as the membrane-anchoring component. The protein is Protein EFR3 homolog A (efr3a) of Xenopus laevis (African clawed frog).